The following is a 284-amino-acid chain: Bifunctional protein FolD (284 aa).

Residues 165–167, serine 190, and valine 231 contribute to the NADP(+) site; that span reads GRS.

This sequence belongs to the tetrahydrofolate dehydrogenase/cyclohydrolase family. Homodimer.

It catalyses the reaction (6R)-5,10-methylene-5,6,7,8-tetrahydrofolate + NADP(+) = (6R)-5,10-methenyltetrahydrofolate + NADPH. It carries out the reaction (6R)-5,10-methenyltetrahydrofolate + H2O = (6R)-10-formyltetrahydrofolate + H(+). It participates in one-carbon metabolism; tetrahydrofolate interconversion. Its function is as follows. Catalyzes the oxidation of 5,10-methylenetetrahydrofolate to 5,10-methenyltetrahydrofolate and then the hydrolysis of 5,10-methenyltetrahydrofolate to 10-formyltetrahydrofolate. The protein is Bifunctional protein FolD of Brevibacillus brevis (strain 47 / JCM 6285 / NBRC 100599).